A 466-amino-acid polypeptide reads, in one-letter code: Probable multidrug resistance protein NorM (466 aa).

11 helical membrane passes run 68–90, 110–132, 142–164, 177–199, 209–231, 251–273, 288–310, 331–353, 368–387, 407–429, and 433–455; these read AHTVYFVSFTFGLGLMAAVSPLV, LWVALLISLPMMASPLYGEHILI, ALAQRYLNGLAWGIAPALGFIAL, PLWITVAAIPVNAALVYVLIHGL, GAGLATTLVNLGTFLAVLAIAAW, LVRQLIALGAPISSSLLLEYGLF, LAAHQIALQVTAVLFMVPLGIGM, AGLVAAVLGVALVSALTVAIILG, SAATVELTATLLLVGATFFI, MTLAFAAIGYWCVAFPVAWVLAF, and LGAVGVWIGFSIGTFVYAGLLVL.

It belongs to the multi antimicrobial extrusion (MATE) (TC 2.A.66.1) family.

It is found in the cell inner membrane. Functionally, multidrug efflux pump. This chain is Probable multidrug resistance protein NorM (norM), found in Bradyrhizobium diazoefficiens (strain JCM 10833 / BCRC 13528 / IAM 13628 / NBRC 14792 / USDA 110).